Here is a 2797-residue protein sequence, read N- to C-terminus: Nonribosomal peptide synthetase penN (2797 aa).

An adenylation 1 region spans residues 239–625; sequence SRPDHPAICA…ARKDSQVKIR (387 aa). The Carrier 1 domain occupies 751–824; that stretch reads TDTERHVHRF…DIVSLVRTAT (74 aa). Ser-785 bears the O-(pantetheine 4'-phosphoryl)serine mark. The disordered stretch occupies residues 830-856; that stretch reads PSAGAEISRSDAPTESPATGSFEGSGY. Residues 870-1299 form a condensation 1 region; sequence QSFSQARMWF…DIEIGSLLLT (430 aa). The adenylation 2 stretch occupies residues 1328-1731; the sequence is FHQQVAAHGD…GRMDQQVKIR (404 aa). Positions 1857–1953 are methyltransferase; the sequence is LEIGTGTGMI…VIKQLIQLHD (97 aa). Residues 2277–2351 form the Carrier 2 domain; the sequence is SFTDDIERAM…RLAGRVRGFR (75 aa). Residue Ser-2311 is modified to O-(pantetheine 4'-phosphoryl)serine. The tract at residues 2516-2658 is condensation 2; the sequence is YDGISLSSIL…VNRTLIRVQL (143 aa).

The protein belongs to the NRP synthetase family.

The catalysed reaction is O-methyl-L-tyrosine + anthranilate + S-adenosyl-L-methionine + 2 ATP = (-)-4'-methoxycyclopeptine + 2 AMP + S-adenosyl-L-homocysteine + 2 diphosphate + 2 H(+). It carries out the reaction anthranilate + L-phenylalanine + S-adenosyl-L-methionine + 2 ATP = cyclopeptine + 2 AMP + S-adenosyl-L-homocysteine + 2 diphosphate + 2 H(+). It participates in secondary metabolite biosynthesis. Its pathway is alkaloid biosynthesis. The protein operates within mycotoxin biosynthesis. Its function is as follows. Nonribosomal peptide synthetase; part of the gene cluster that mediates the biosynthesis of penigequinolones, potent insecticidal alkaloids that contain a highly modified 10-carbon prenyl group. The first stage is catalyzed by the nonribosomal peptide synthetase penN that condenses anthranilic acid and O-methyl-L-tyrosine to produce 4'-methoxycyclopeptin. 4'-methoxycyclopeptin is then converted to 4'-methoxydehydrocyclopeptin by the ketoglutarate-dependent dioxygenase penM through dehydrogenation to form a double bond between C-alpha and C-beta of the O-methyltyrosine side chain. PenM also converts its first product methoxydehydrocyclopeptin to 4'-methoxycyclopenin. The following conversion of 4'methoxycyclopenin into 4'-methoxyviridicatin is catalyzed by the cyclopenase penL. 4'-methoxyviridicatin is the precursor of quinolone natural products, and is further converted to quinolinone B. The prenyltransferase penI then catalyzes the canonical Friedel-Crafts alkylation of quinolinone B with dimethylallyl cation to yield dimethylallyl quinolone, which is subjected to FAD-dependent dehydrogenation by the FAD-linked oxidoreductase penH to yield conjugated aryl diene. The delta(3') double bond then serves as the site of the second alkylation with DMAPP catalyzed by the prenyltransferase penG to yield a carbenium ion intermediate, which can be attacked by H(2)O to yield a styrenyl quinolone containing a C3'-hydroxyprenyl chain, or undergo cyclization to yield yaequinolones J1 and J2. The conversion of the styrenyl quinolone into the tetrahydrofuran-containing yaequinolone C is performed by the FAD-dependent monooxygenase penE and involves epoxidation of the terminal C7'-C8' olefin, followed by epoxide ring opening initiated by the C3' hydroxyl group. The predicted cysteine hydrolase penJ acts as an epoxide hydrolase that enhances the rate of the 5-exo-tet cyclization step, increasing the yield of yaequinolone C. PenF catalyzes the cationic rearrangement of the epoxide formed by penE (before ring opening to produce yaequinolone C) into yaequinolone D. Finally, the short-chain dehydrogenase/reductase (SDR)-like reductase penD, catalyzes both the dehydration of yaequinolone D and the reduction of the resulting oxonium to yield penigequinolone. The sequence is that of Nonribosomal peptide synthetase penN from Penicillium thymicola.